Here is a 348-residue protein sequence, read N- to C-terminus: UDP-glucose 4-epimerase (348 aa).

Residues 12 to 14 (GYI), 33 to 37 (DNFHN), 66 to 67 (DI), phenylalanine 88, and lysine 92 contribute to the NAD(+) site. A substrate-binding site is contributed by 132–134 (SAT). The active-site Proton acceptor is the tyrosine 157. Lysine 161 and tyrosine 185 together coordinate NAD(+). Substrate is bound by residues 185 to 187 (YFN), 206 to 208 (NNL), 224 to 226 (NVF), arginine 239, and 300 to 303 (REGD).

Belongs to the NAD(P)-dependent epimerase/dehydratase family. In terms of assembly, homodimer. NAD(+) serves as cofactor.

The catalysed reaction is UDP-alpha-D-glucose = UDP-alpha-D-galactose. It carries out the reaction UDP-N-acetyl-alpha-D-glucosamine = UDP-N-acetyl-alpha-D-galactosamine. It functions in the pathway carbohydrate metabolism; galactose metabolism. Its function is as follows. Catalyzes two distinct but analogous reactions: the reversible epimerization of UDP-glucose to UDP-galactose and the reversible epimerization of UDP-N-acetylglucosamine to UDP-N-acetylgalactosamine. The reaction with UDP-Gal plays a critical role in the Leloir pathway of galactose catabolism in which galactose is converted to the glycolytic intermediate glucose 6-phosphate. It contributes to the catabolism of dietary galactose and enables the endogenous biosynthesis of both UDP-Gal and UDP-GalNAc when exogenous sources are limited. Both UDP-sugar interconversions are important in the synthesis of glycoproteins and glycolipids. The polypeptide is UDP-glucose 4-epimerase (Homo sapiens (Human)).